Consider the following 122-residue polypeptide: Large ribosomal subunit protein uL18 (122 aa).

The protein belongs to the universal ribosomal protein uL18 family. Part of the 50S ribosomal subunit; part of the 5S rRNA/L5/L18/L25 subcomplex. Contacts the 5S and 23S rRNAs.

Its function is as follows. This is one of the proteins that bind and probably mediate the attachment of the 5S RNA into the large ribosomal subunit, where it forms part of the central protuberance. The polypeptide is Large ribosomal subunit protein uL18 (Mycobacterium ulcerans (strain Agy99)).